Here is a 464-residue protein sequence, read N- to C-terminus: Soluble pyridine nucleotide transhydrogenase (464 aa).

An FAD-binding site is contributed by 35–44 (DSRREVGGNC).

This sequence belongs to the class-I pyridine nucleotide-disulfide oxidoreductase family. Requires FAD as cofactor.

The protein resides in the cytoplasm. It carries out the reaction NAD(+) + NADPH = NADH + NADP(+). Conversion of NADPH, generated by peripheral catabolic pathways, to NADH, which can enter the respiratory chain for energy generation. The chain is Soluble pyridine nucleotide transhydrogenase from Pseudomonas syringae pv. tomato (strain ATCC BAA-871 / DC3000).